Here is a 299-residue protein sequence, read N- to C-terminus: Protease HtpX homolog (299 aa).

The next 2 helical transmembrane spans lie at 14-34 (ILVM…VGYL) and 39-59 (ATGG…IMVG). Residue His-144 participates in Zn(2+) binding. Glu-145 is an active-site residue. Zn(2+) is bound at residue His-148. A run of 2 helical transmembrane segments spans residues 159 to 179 (IALA…NFMW) and 196 to 216 (VFAI…ATMV). Glu-225 is a Zn(2+) binding site.

It belongs to the peptidase M48B family. Requires Zn(2+) as cofactor.

It is found in the cell membrane. The sequence is that of Protease HtpX homolog from Limosilactobacillus fermentum (strain NBRC 3956 / LMG 18251) (Lactobacillus fermentum).